Consider the following 854-residue polypeptide: Protein unc-33 (854 aa).

3 disordered regions span residues 57–114 (ETVS…IPAP), 130–327 (ELFG…DGNG), and 794–854 (VERV…TGFW). Composition is skewed to polar residues over residues 58–68 (TVSNKSRSSEG) and 75–97 (RPNS…TSAR). The span at 193–202 (KVLRGEKSTP) shows a compositional bias: basic and acidic residues. A compositionally biased stretch (acidic residues) spans 240–257 (VDDEEEPEAEAQEMEEPQ). A compositionally biased stretch (basic and acidic residues) spans 279 to 298 (HPSEDGDSTRNGETPTDRRN). Polar residues predominate over residues 802 to 811 (SSQQQKPQQN). Basic and acidic residues predominate over residues 816-827 (NSGDFDRNRTKV).

The protein belongs to the metallo-dependent hydrolases superfamily. Hydantoinase/dihydropyrimidinase family. As to quaternary structure, isoform a: Probable monomer. Isoform b: Probable homodimer. Isoform c: Probable homodimer. Probable heterodimer composed of isoform b and isoform c. Interacts with unc-14 and kinesin-1 motor complex light chain klc-1; both interactions regulate unc-33 neurite localization. Interacts with fln-1 (via calponin-homology (CH) domains and filamin repeat 18-19). Isoform c: Interacts with vab-8 isoform a. As to expression, expressed in ventral cord and nerve ring (at protein level). Isoform a: Expressed in nerve ring (at protein level). Expressed in the nervous system, two amphid socket cells and weakly in non-neuronal pharyngeal cells.

The protein localises to the cell projection. Its subcellular location is the axon. The protein resides in the dendrite. Its function is as follows. During neurogenesis, plays an essential role in axonal guidance and outgrowth by regulating the polarization of both microtubule and actin cytoskeletons. Establishes the asymmetry of axonal and dendrite microtubules and the polarized sorting of neuronal proteins. This is achieved in part by regulating the localization of kinesin-like protein unc-104. In neurons without a distal microtubule-organizing center (MTOC), also controls the organization of microtubules in dendrites. During the dorso-ventral axonal guidance and outgrowth of VD neurons, required downstream of Rac GTPases ced-10 and mig-2 to inhibit growth cone filopodial protrusion mediated by the unc-6/netrin receptor unc-40-unc-5. Specifically, regulates growth cone filopodial protrusion polarity, and thus migration, by promoting F-actin polarization and by restricting plus-end microtubule accumulation in the growth cone. Probably downstream of mab-20/Sema2a and mab-20 receptor plx-2, regulates the guidance of DD/VD neuron axons by modulating fln-1 interaction with F-actin which results in the remodeling of the actin cytoskeleton. In hermaphrodites, involved in sex myoblast (SM) migration by regulating the gonad-dependent repulsion of SMs. In terms of biological role, in neurons, required for the polarized sorting of axonal proteins. In PLM neuron, regulates innexin unc-9 gap junction turnover by suppressing unc-9 transport out of gap junctions. Plays a role in locomotion and egg-laying. In PLM neuron, regulates innexin unc-9 gap junction turnover by suppressing unc-9 transport out of gap junctions. The chain is Protein unc-33 from Caenorhabditis elegans.